The chain runs to 513 residues: Light-independent protochlorophyllide reductase subunit B (513 aa).

Position 36 (D36) interacts with [4Fe-4S] cluster. The active-site Proton donor is D299. 434–435 (GM) is a binding site for substrate.

The protein belongs to the ChlB/BchB/BchZ family. As to quaternary structure, protochlorophyllide reductase is composed of three subunits; ChlL, ChlN and ChlB. Forms a heterotetramer of two ChlB and two ChlN subunits. Requires [4Fe-4S] cluster as cofactor.

The protein resides in the plastid. It is found in the chloroplast. It carries out the reaction chlorophyllide a + oxidized 2[4Fe-4S]-[ferredoxin] + 2 ADP + 2 phosphate = protochlorophyllide a + reduced 2[4Fe-4S]-[ferredoxin] + 2 ATP + 2 H2O. The protein operates within porphyrin-containing compound metabolism; chlorophyll biosynthesis (light-independent). Functionally, component of the dark-operative protochlorophyllide reductase (DPOR) that uses Mg-ATP and reduced ferredoxin to reduce ring D of protochlorophyllide (Pchlide) to form chlorophyllide a (Chlide). This reaction is light-independent. The NB-protein (ChlN-ChlB) is the catalytic component of the complex. This chain is Light-independent protochlorophyllide reductase subunit B, found in Staurastrum punctulatum (Green alga).